Consider the following 117-residue polypeptide: Large ribosomal subunit protein uL18 (117 aa).

The protein belongs to the universal ribosomal protein uL18 family. In terms of assembly, part of the 50S ribosomal subunit; part of the 5S rRNA/L5/L18/L25 subcomplex. Contacts the 5S and 23S rRNAs.

Functionally, this is one of the proteins that bind and probably mediate the attachment of the 5S RNA into the large ribosomal subunit, where it forms part of the central protuberance. The sequence is that of Large ribosomal subunit protein uL18 from Pectobacterium carotovorum subsp. carotovorum (strain PC1).